A 173-amino-acid polypeptide reads, in one-letter code: Phosphopantetheine adenylyltransferase (173 aa).

Serine 9 serves as a coordination point for substrate. Residues serine 9–phenylalanine 10 and histidine 17 each bind ATP. Residues lysine 41, threonine 73, and arginine 87 each coordinate substrate. Residues glycine 88–arginine 90, glutamate 98, and tyrosine 123–serine 129 each bind ATP.

It belongs to the bacterial CoaD family. Homohexamer. The cofactor is Mg(2+).

It is found in the cytoplasm. It catalyses the reaction (R)-4'-phosphopantetheine + ATP + H(+) = 3'-dephospho-CoA + diphosphate. It functions in the pathway cofactor biosynthesis; coenzyme A biosynthesis; CoA from (R)-pantothenate: step 4/5. Functionally, reversibly transfers an adenylyl group from ATP to 4'-phosphopantetheine, yielding dephospho-CoA (dPCoA) and pyrophosphate. In Limosilactobacillus reuteri (strain DSM 20016) (Lactobacillus reuteri), this protein is Phosphopantetheine adenylyltransferase.